The following is a 380-amino-acid chain: Deoxyguanosinetriphosphate triphosphohydrolase-like protein (380 aa).

The HD domain maps to 79-196 (RLTHTLEVQQ…VDAADALAYT (118 aa)).

It belongs to the dGTPase family. Type 2 subfamily.

The chain is Deoxyguanosinetriphosphate triphosphohydrolase-like protein from Deinococcus deserti (strain DSM 17065 / CIP 109153 / LMG 22923 / VCD115).